We begin with the raw amino-acid sequence, 397 residues long: Methylthioribose kinase (397 aa).

ATP-binding positions include Asn43, Lys60, and 114–116; that span reads EDL. Asp232 serves as a coordination point for substrate. Position 249-251 (249-251) interacts with ATP; the sequence is DPE. Arg340 is a substrate binding site.

It belongs to the methylthioribose kinase family. In terms of assembly, homodimer.

It carries out the reaction 5-(methylsulfanyl)-D-ribose + ATP = 5-(methylsulfanyl)-alpha-D-ribose 1-phosphate + ADP + H(+). It functions in the pathway amino-acid biosynthesis; L-methionine biosynthesis via salvage pathway; S-methyl-5-thio-alpha-D-ribose 1-phosphate from S-methyl-5'-thioadenosine (hydrolase route): step 2/2. Its function is as follows. Catalyzes the phosphorylation of methylthioribose into methylthioribose-1-phosphate. The protein is Methylthioribose kinase of Bacillus pumilus (strain SAFR-032).